The sequence spans 215 residues: Rho-related GTP-binding protein RhoF (215 aa).

Methionine 1 carries the N-acetylmethionine modification. 30-37 (GDGGCGKT) contributes to the GTP binding site. An Effector region motif is present at residues 52-60 (YAPSVFEKY). GTP is bound by residues 77–81 (DTAGQ) and 135–138 (CKTD). Cysteine 212 bears the Cysteine methyl ester mark. A lipid anchor (S-geranylgeranyl cysteine) is attached at cysteine 212. The propeptide at 213–215 (LLL) is removed in mature form.

It belongs to the small GTPase superfamily. Rho family.

The protein localises to the cell membrane. It is found in the cytoplasm. It localises to the cytoskeleton. In terms of biological role, plasma membrane-associated small GTPase which cycles between an active GTP-bound and an inactive GDP-bound state. Causes the formation of thin, actin-rich surface projections called filopodia. Functions cooperatively with CDC42 and Rac to generate additional structures, increasing the diversity of actin-based morphology. The polypeptide is Rho-related GTP-binding protein RhoF (RHOF) (Bos taurus (Bovine)).